Reading from the N-terminus, the 918-residue chain is Whirlin (918 aa).

Residues 141–224 (LVSLRRAKAH…LVLSVYSAGR (84 aa)) form the PDZ 1 domain. The tract at residues 240–266 (PQGRSTSPPSSLPQPHGSTLRQREDDR) is disordered. The PDZ 2 domain occupies 280–362 (KVNLVLGDGR…LILTVKDVGR (83 aa)). 3 disordered regions span residues 387–407 (NSAG…GFYK), 503–538 (SMKA…TSTT), and 560–824 (EGTG…LEPT). Residues 522–538 (SYSDTGSSTGSHGTSTT) show a composition bias toward low complexity. The span at 563–572 (GETTQGSTNA) shows a compositional bias: polar residues. Composition is skewed to pro residues over residues 591-600 (IKPPPPPPPL) and 638-649 (RSPPPGTAPTPG). Over residues 654–672 (QDSPSSPIYASISHANPSS) the composition is skewed to polar residues. Residue Ser-696 is modified to Phosphoserine. 2 stretches are compositionally biased toward polar residues: residues 754 to 773 (QTRT…TLSE) and 783 to 798 (EAST…SAKN). Basic and acidic residues predominate over residues 800–811 (NGKEQPRTERTA). One can recognise a PDZ 3 domain in the interval 827 to 910 (LVRVRKSAAT…TKERDYIDFL (84 aa)).

Forms homooligomers. Interacts (via C-terminal PDZ domain) with MYO15A; this interaction is necessary for localization of WHRN to stereocilia tips. Interacts (via C-terminal PDZ domain) with MPP1/p55. Interacts with LRRC4C/NGL1. Interacts with MYO7A. Interacts with RPGR. Interacts with EPS8. Interacts with CASK. Interacts with CIB2. Component of USH2 complex, composed of ADGRV1, PDZD7, USH2A and WHRN. Interacts (via PDZ domains) with PDZD7; the interaction is direct. Interacts (via N-terminal PDZ domain) with USH2A (via cytoplasmic region). Interacts with ADGRV1/MASS1 (via cytoplasmic region). Expressed in the retina. Colocalizes with RPGR in the photoreceptor connecting cilium, a thin bridge linking the cell body and the light-sensing outer segment (at protein level). Detected in the inner ear throughout development from embryonic day 12 to 20 days after birth. Displays a dynamic pattern of expression after birth, demonstrating an ordered appearance and fade-out across stereocilia rows. Isoforms 5, 6, 7 and 8 are not detected in the retina.

Its subcellular location is the cytoplasm. It localises to the cell projection. It is found in the stereocilium. The protein localises to the growth cone. The protein resides in the photoreceptor inner segment. Its subcellular location is the synapse. Its function is as follows. Involved in hearing and vision as member of the USH2 complex. Necessary for elongation and maintenance of inner and outer hair cell stereocilia in the organ of Corti in the inner ear. Involved in the maintenance of the hair bundle ankle region, which connects stereocilia in cochlear hair cells of the inner ear. In retina photoreceptors, required for the maintenance of periciliary membrane complex that seems to play a role in regulating intracellular protein transport. The protein is Whirlin of Mus musculus (Mouse).